The following is a 285-amino-acid chain: MKFGIVVNINRKDALELASELVIWLKNRSLDYLFDSLSAKALNVNESSPIEAMNTHCDVFISLGGDGTLLFTSHYSVTKPVIGINVGHLGFLTEFSKEEMYGAIEKVLNGSYTIYERTQLEAHIDVEHEKKRFTALNDVVIEKGTYSRIPTFNIKLDDEQLSAYRADGIIIATSTGSTAYSLSAGGPVIFPKSNVFVITPICPHMLTVRPIVISDDKHIEVFVDAPDGEFPLNCDGHQRKLLLPGEVISVKKSEEMINLVANENRNYCEILRSKLLWGREHKPGL.

D66 acts as the Proton acceptor in catalysis. Residues 66 to 67 (DG), 137 to 138 (ND), R148, R165, D167, and 178 to 183 (TAYSLS) contribute to the NAD(+) site.

The protein belongs to the NAD kinase family. A divalent metal cation serves as cofactor.

It localises to the cytoplasm. The enzyme catalyses NAD(+) + ATP = ADP + NADP(+) + H(+). In terms of biological role, involved in the regulation of the intracellular balance of NAD and NADP, and is a key enzyme in the biosynthesis of NADP. Catalyzes specifically the phosphorylation on 2'-hydroxyl of the adenosine moiety of NAD to yield NADP. This is NAD kinase from Chlorobium phaeobacteroides (strain BS1).